The sequence spans 210 residues: WASH complex subunit 3 (210 aa).

A coiled-coil region spans residues Glu-49–Leu-73. Residues Leu-173–Asp-210 form a disordered region. The segment covering Asp-195 to Ser-204 has biased composition (acidic residues).

Belongs to the CCDC53 family. In terms of assembly, component of the WASH complex.

This chain is WASH complex subunit 3, found in Salmo salar (Atlantic salmon).